Here is a 567-residue protein sequence, read N- to C-terminus: MTFIGWCQIALFGAVVVALVKPLGWYMTRVFAGEWTPLTPVLRPVETMLYRAAGVDPKQEQHWLTFTLAMLLFHIGGFAIIYAVLRLQALLPFNPAEQGAVAPDLAFNTAISFLTNTNWQNYGGESTLSYLSQMLALTHQNFLSAATGIVLAMALIRGFSRASVRTIGNFWVDITRCTLYVLLPICIPYALFLVWQGMPQTLGSYVDATTLEGAKQTIAVGPVASQVAIKMLGTNGGGFFNANAAHPFENPTALSNFVQMLSIFVLGAALTNVFGRMIGNQRQGWAILGVMGVLFVVGIAVAYWAEASGTATLDALGITGGNMEGKEVRFGIVASALFAVVTTAASCGAVNAMHDSFTALGGMIPLINMQLGEIIVGGVGAGLYGMLLFVVLAIFVAGLMVGRTPEYVGKKIEAREVKMAMLAILVLPLMYLGWTAIAVVLPSAVASMGNAGPHGFSEVLYAFTSATANNGSAFGGLTGNTFFYNLTLATAMFVGRFMMIVPTMAIAGSLAGKKLVPPSAGTLPTTGGLFVGLVVGVILIIGGLTFFPALALGPIVEQVSMSAKTLF.

Transmembrane regions (helical) follow at residues 3–23 (FIGWCQIALFGAVVVALVKPL), 64–84 (LTFTLAMLLFHIGGFAIIYAV), 136–156 (ALTHQNFLSAATGIVLAMALI), 179–199 (LYVLLPICIPYALFLVWQGMP), 254–274 (LSNFVQMLSIFVLGAALTNVF), 285–305 (WAILGVMGVLFVVGIAVAYWA), 330–350 (FGIVASALFAVVTTAASCGAV), 357–376 (FTALGGMIPLINMQLGEIIV), 421–441 (MLAILVLPLMYLGWTAIAVVL), 473–495 (AFGGLTGNTFFYNLTLATAMFVG), and 527–547 (GGLFVGLVVGVILIIGGLTFF).

The protein belongs to the KdpA family. The system is composed of three essential subunits: KdpA, KdpB and KdpC.

The protein resides in the cell inner membrane. Functionally, part of the high-affinity ATP-driven potassium transport (or Kdp) system, which catalyzes the hydrolysis of ATP coupled with the electrogenic transport of potassium into the cytoplasm. This subunit binds the periplasmic potassium ions and delivers the ions to the membrane domain of KdpB through an intramembrane tunnel. The sequence is that of Potassium-transporting ATPase potassium-binding subunit from Rhodopseudomonas palustris (strain ATCC BAA-98 / CGA009).